The following is a 412-amino-acid chain: Argininosuccinate synthase (412 aa).

ATP contacts are provided by residues 10 to 18 and alanine 36; that span reads AYSGGLDTS. The L-citrulline site is built by tyrosine 87 and serine 92. A Phosphotyrosine modification is found at tyrosine 87. The residue at position 112 (lysine 112) is an N6-acetyllysine. Phosphotyrosine is present on tyrosine 113. 115–123 provides a ligand contact to ATP; that stretch reads SHGATGKGN. L-aspartate contacts are provided by threonine 119, asparagine 123, and aspartate 124. Asparagine 123 provides a ligand contact to L-citrulline. Arginine 127 provides a ligand contact to L-citrulline. N6-acetyllysine; by CLOCK is present on residues lysine 165 and lysine 176. 2 residues coordinate L-citrulline: serine 180 and serine 189. The residue at position 180 (serine 180) is a Phosphoserine. Threonine 219 bears the Phosphothreonine mark. L-citrulline contacts are provided by glutamate 270 and tyrosine 282.

It belongs to the argininosuccinate synthase family. Type 1 subfamily. As to quaternary structure, homotetramer. Interacts with NMRAL1. Interacts with CLOCK; in a circadian manner. Forms tissue-specific complexes with ASL, SLC7A1, HSP90AA1 and nitric oxide synthase NOS1, NOS2 or NOS3; the complex regulates cell-autonomous L-arginine synthesis and citrulline recycling while channeling extracellular L-arginine to nitric oxide synthesis pathway. In terms of processing, acetylated by CLOCK in a circadian manner which negatively regulates its enzyme activity. Deacetylated by histone deacetylases. Expressed in adult liver.

The protein resides in the cytoplasm. Its subcellular location is the cytosol. The catalysed reaction is L-citrulline + L-aspartate + ATP = 2-(N(omega)-L-arginino)succinate + AMP + diphosphate + H(+). Its pathway is amino-acid biosynthesis; L-arginine biosynthesis; L-arginine from L-ornithine and carbamoyl phosphate: step 2/3. It functions in the pathway nitrogen metabolism; urea cycle; (N(omega)-L-arginino)succinate from L-aspartate and L-citrulline: step 1/1. One of the enzymes of the urea cycle, the metabolic pathway transforming neurotoxic amonia produced by protein catabolism into inocuous urea in the liver of ureotelic animals. Catalyzes the formation of arginosuccinate from aspartate, citrulline and ATP and together with ASL it is responsible for the biosynthesis of arginine in most body tissues. This Homo sapiens (Human) protein is Argininosuccinate synthase.